The following is a 569-amino-acid chain: Arginine--tRNA ligase (569 aa).

A 'HIGH' region motif is present at residues 123 to 133; the sequence is ANPNGPLHVGH.

The protein belongs to the class-I aminoacyl-tRNA synthetase family.

Its subcellular location is the cytoplasm. The catalysed reaction is tRNA(Arg) + L-arginine + ATP = L-arginyl-tRNA(Arg) + AMP + diphosphate. The protein is Arginine--tRNA ligase of Methanosarcina mazei (strain ATCC BAA-159 / DSM 3647 / Goe1 / Go1 / JCM 11833 / OCM 88) (Methanosarcina frisia).